The chain runs to 51 residues: Cytoplasmic FMR1-interacting protein 1 (51 aa).

The protein belongs to the CYFIP family. Component of the WAVE1 complex composed of ABI2, CYFIP1 or CYFIP2, BRK1, NCKAP1 and WASF1/WAVE1. Within the complex, a heterodimer containing NCKAP1 and CYFIP1 interacts with a heterotrimer formed by WAVE1, ABI2 and BRK1. Component of the CYFIP1-EIF4E-FMR1 complex which is composed of CYFIP, EIF4E and FMR1. Interacts with FMR1 but does not bind to related proteins FXR1 or FXR2. Interaction with EIF4E stimulates FMR1 binding. Component of the WAVE2 complex composed of ABI1, CYFIP1/SRA1, NCKAP1/NAP1 (NCKAP1l/HEM1 in hematopoietic cells) and WASF2/WAVE2. Interacts with the active GTP-bound form of RAC1. Interacts through its C-terminus with the C-terminus of DPYSL2/CRMP2 which is necessary for DPYSL2-induced axon outgrowth. Interacts with NYAP1, NYAP2 and MYO16. Interacts with TMEM108 (via N-terminus); the interaction associates TMEM108 with the WAVE1 complex.

The protein resides in the cytoplasm. The protein localises to the perinuclear region. Its subcellular location is the cell projection. It localises to the lamellipodium. It is found in the ruffle. The protein resides in the synapse. The protein localises to the synaptosome. Functionally, component of the CYFIP1-EIF4E-FMR1 complex which binds to the mRNA cap and mediates translational repression. In the CYFIP1-EIF4E-FMR1 complex this subunit is an adapter between EIF4E and FMR1. Promotes the translation repression activity of FMR1 in brain probably by mediating its association with EIF4E and mRNA. Regulates formation of membrane ruffles and lamellipodia. Plays a role in axon outgrowth. Binds to F-actin but not to RNA. Part of the WAVE complex that regulates actin filament reorganization via its interaction with the Arp2/3 complex. Actin remodeling activity is regulated by RAC1. Regulator of epithelial morphogenesis. As component of the WAVE1 complex, required for BDNF-NTRK2 endocytic trafficking and signaling from early endosomes. This chain is Cytoplasmic FMR1-interacting protein 1, found in Bos taurus (Bovine).